Reading from the N-terminus, the 139-residue chain is D-ribose pyranase (139 aa).

The active-site Proton donor is histidine 20. Substrate contacts are provided by residues aspartate 28, histidine 106, and 128 to 130 (YAN).

It belongs to the RbsD / FucU family. RbsD subfamily. In terms of assembly, homodecamer.

Its subcellular location is the cytoplasm. It catalyses the reaction beta-D-ribopyranose = beta-D-ribofuranose. Its pathway is carbohydrate metabolism; D-ribose degradation; D-ribose 5-phosphate from beta-D-ribopyranose: step 1/2. Catalyzes the interconversion of beta-pyran and beta-furan forms of D-ribose. This Cronobacter sakazakii (strain ATCC BAA-894) (Enterobacter sakazakii) protein is D-ribose pyranase.